Reading from the N-terminus, the 102-residue chain is Small ribosomal subunit protein uS10 (102 aa).

Belongs to the universal ribosomal protein uS10 family. Part of the 30S ribosomal subunit.

Functionally, involved in the binding of tRNA to the ribosomes. This chain is Small ribosomal subunit protein uS10, found in Streptococcus equi subsp. zooepidemicus (strain MGCS10565).